The sequence spans 344 residues: Phenylalanine--tRNA ligase alpha subunit (344 aa).

Glu259 serves as a coordination point for Mg(2+).

Belongs to the class-II aminoacyl-tRNA synthetase family. Phe-tRNA synthetase alpha subunit type 1 subfamily. Tetramer of two alpha and two beta subunits. Mg(2+) is required as a cofactor.

The protein resides in the cytoplasm. The enzyme catalyses tRNA(Phe) + L-phenylalanine + ATP = L-phenylalanyl-tRNA(Phe) + AMP + diphosphate + H(+). This is Phenylalanine--tRNA ligase alpha subunit from Nitrosospira multiformis (strain ATCC 25196 / NCIMB 11849 / C 71).